The following is a 161-amino-acid chain: MAKAIVLLSALCILALANFAHCRPEVFDVEGKVYCDTCRVQFETKLSENLEGATVKLQCRNISTEAETFSVEGVTDKDGKYKLTVNGDHENDICEVTVVKSPREDCKESVSGYEKARIECSDNVGIHNAVRFANPLFFMKAESVQGCKEALDELGLFPLEF.

Residues 1 to 17 (MAKAIVLLSALCILALA) form the signal peptide. 3 disulfides stabilise this stretch: Cys35–Cys106, Cys38–Cys147, and Cys59–Cys94. An N-linked (GlcNAc...) asparagine glycan is attached at Asn61.

The protein belongs to the Ole e I family. As to expression, expressed in anthers and pollen.

In terms of biological role, may play a role during germination or early tube growth. This chain is Anther-specific protein LAT52 (LAT52), found in Solanum lycopersicum (Tomato).